Consider the following 154-residue polypeptide: Deoxyuridine 5'-triphosphate nucleotidohydrolase (154 aa).

Residues 74 to 76 (RSG), asparagine 87, 91 to 93 (TID), and lysine 101 each bind substrate.

The protein belongs to the dUTPase family. Requires Mg(2+) as cofactor.

It catalyses the reaction dUTP + H2O = dUMP + diphosphate + H(+). It functions in the pathway pyrimidine metabolism; dUMP biosynthesis; dUMP from dCTP (dUTP route): step 2/2. Functionally, this enzyme is involved in nucleotide metabolism: it produces dUMP, the immediate precursor of thymidine nucleotides and it decreases the intracellular concentration of dUTP so that uracil cannot be incorporated into DNA. In Cytophaga hutchinsonii (strain ATCC 33406 / DSM 1761 / CIP 103989 / NBRC 15051 / NCIMB 9469 / D465), this protein is Deoxyuridine 5'-triphosphate nucleotidohydrolase.